The following is a 264-amino-acid chain: S-adenosylmethionine decarboxylase proenzyme (264 aa).

Catalysis depends on Ser-112, which acts as the Schiff-base intermediate with substrate; via pyruvic acid. Residue Ser-112 is modified to Pyruvic acid (Ser); by autocatalysis. His-117 functions as the Proton acceptor; for processing activity in the catalytic mechanism. Cys-140 serves as the catalytic Proton donor; for catalytic activity.

This sequence belongs to the prokaryotic AdoMetDC family. Type 2 subfamily. Heterooctamer of four alpha and four beta chains arranged as a tetramer of alpha/beta heterodimers. The cofactor is pyruvate. In terms of processing, is synthesized initially as an inactive proenzyme. Formation of the active enzyme involves a self-maturation process in which the active site pyruvoyl group is generated from an internal serine residue via an autocatalytic post-translational modification. Two non-identical subunits are generated from the proenzyme in this reaction, and the pyruvate is formed at the N-terminus of the alpha chain, which is derived from the carboxyl end of the proenzyme. The post-translation cleavage follows an unusual pathway, termed non-hydrolytic serinolysis, in which the side chain hydroxyl group of the serine supplies its oxygen atom to form the C-terminus of the beta chain, while the remainder of the serine residue undergoes an oxidative deamination to produce ammonia and the pyruvoyl group blocking the N-terminus of the alpha chain.

The enzyme catalyses S-adenosyl-L-methionine + H(+) = S-adenosyl 3-(methylsulfanyl)propylamine + CO2. It functions in the pathway amine and polyamine biosynthesis; S-adenosylmethioninamine biosynthesis; S-adenosylmethioninamine from S-adenosyl-L-methionine: step 1/1. In terms of biological role, catalyzes the decarboxylation of S-adenosylmethionine to S-adenosylmethioninamine (dcAdoMet), the propylamine donor required for the synthesis of the polyamines spermine and spermidine from the diamine putrescine. This is S-adenosylmethionine decarboxylase proenzyme from Yersinia pseudotuberculosis serotype I (strain IP32953).